A 349-amino-acid chain; its full sequence is Anthranilate phosphoribosyltransferase (349 aa).

5-phospho-alpha-D-ribose 1-diphosphate contacts are provided by residues Gly82, 85–86, 92–95, 110–118, and Ser122; these read GD, NVSS, and KHGNRAVSG. Gly82 contributes to the anthranilate binding site. Ser94 contributes to the Mg(2+) binding site. Asn113 is a binding site for anthranilate. An anthranilate-binding site is contributed by Arg168. Mg(2+) contacts are provided by Asp227 and Glu228.

It belongs to the anthranilate phosphoribosyltransferase family. In terms of assembly, homodimer. The cofactor is Mg(2+).

It carries out the reaction N-(5-phospho-beta-D-ribosyl)anthranilate + diphosphate = 5-phospho-alpha-D-ribose 1-diphosphate + anthranilate. It participates in amino-acid biosynthesis; L-tryptophan biosynthesis; L-tryptophan from chorismate: step 2/5. Its function is as follows. Catalyzes the transfer of the phosphoribosyl group of 5-phosphorylribose-1-pyrophosphate (PRPP) to anthranilate to yield N-(5'-phosphoribosyl)-anthranilate (PRA). This Pseudomonas aeruginosa (strain LESB58) protein is Anthranilate phosphoribosyltransferase.